A 547-amino-acid polypeptide reads, in one-letter code: Elongator complex protein 3 (547 aa).

Residues 82–372 (RTASGIAVVA…YRVQRDIPMP (291 aa)) form the Radical SAM core domain. Residues Cys99, Cys109, and Cys112 each coordinate [4Fe-4S] cluster. Ser161 is modified (phosphoserine). Position 164 (Lys164) interacts with acetyl-CoA. Phosphotyrosine; by ALK is present on Tyr202. At Lys229 the chain carries N6-methyllysine. The residue at position 251 (Tyr251) is a Phosphotyrosine. Residues 396-547 (IQCRDVRTRE…QGPYMVKMLK (152 aa)) enclose the N-acetyltransferase domain. Acetyl-CoA-binding positions include 474-477 (ELHV), 497-499 (FGM), and Tyr530.

Belongs to the ELP3 family. As to quaternary structure, component of the elongator complex which consists of ELP1, ELP2, ELP3, ELP4, ELP5 and ELP6. ELP1, ELP2 and ELP3 form the elongator core complex. Interacts with alpha-tubulin. [4Fe-4S] cluster is required as a cofactor. Post-translationally, tyrosine-phosphorylated; phosphorylation on Tyr-202 does not affect elongator complex integrity or ELP3 protein stability. Also serine/threonine-phosphorylated. Expressed in the cerebellum and spinal motor neurons.

Its subcellular location is the cytoplasm. It localises to the nucleus. The catalysed reaction is uridine(34) in tRNA + acetyl-CoA + S-adenosyl-L-methionine + H2O = 5-(carboxymethyl)uridine(34) in tRNA + 5'-deoxyadenosine + L-methionine + CoA + 2 H(+). Its pathway is tRNA modification; 5-methoxycarbonylmethyl-2-thiouridine-tRNA biosynthesis. Functionally, catalytic tRNA acetyltransferase subunit of the elongator complex which is required for multiple tRNA modifications, including mcm5U (5-methoxycarbonylmethyl uridine), mcm5s2U (5-methoxycarbonylmethyl-2-thiouridine), and ncm5U (5-carbamoylmethyl uridine). In the elongator complex, acts as a tRNA uridine(34) acetyltransferase by mediating formation of carboxymethyluridine in the wobble base at position 34 in tRNAs. May also act as a protein lysine acetyltransferase by mediating acetylation of target proteins; such activity is however unclear in vivo and recent evidences suggest that ELP3 primarily acts as a tRNA acetyltransferase. Involved in neurogenesis: regulates the migration and branching of projection neurons in the developing cerebral cortex, through a process depending on alpha-tubulin acetylation. Required for acetylation of GJA1 in the developing cerebral cortex. This Homo sapiens (Human) protein is Elongator complex protein 3.